We begin with the raw amino-acid sequence, 173 residues long: MKTTHLVLVLCFLAGVAQTTLALKEEDCEVCIKTVRRFAASLDDAIKGDYKQIETEFKKFCKTQKNKEHRFCYYLGGLEESATGILNEMSKPLSWSMPAEKVCEKLKKKDAQICDLRYEKQIDLNSVDLKKLKVRDLKKILNDWDESCDGCLEKSDFIKRIEELKPKYARSEL.

Positions 1–22 are cleaved as a signal peptide; sequence MKTTHLVLVLCFLAGVAQTTLA. 4 cysteine pairs are disulfide-bonded: Cys28–Cys114, Cys31–Cys103, Cys61–Cys72, and Cys148–Cys151.

Belongs to the ARMET family.

The protein localises to the secreted. Required during the maturation of the embryonic nervous system for maintenance of neuronal and cuticular connectivity. Essential for maintenance of dopaminergic neurons and dopamine levels. The protein is Mesencephalic astrocyte-derived neurotrophic factor homolog of Drosophila persimilis (Fruit fly).